The chain runs to 138 residues: Basic phospholipase A2 homolog Ts-K49a (138 aa).

The first 16 residues, 1–16 (MRTLWIMAVLLLGVEG), serve as a signal peptide directing secretion. 7 cysteine pairs are disulfide-bonded: C42/C131, C44/C60, C59/C111, C65/C138, C66/C104, C73/C97, and C91/C102. The segment at 121 to 133 (KKKKINLKLFCKK) is important for membrane-damaging activities in eukaryotes and bacteria; heparin-binding.

As to expression, expressed by the venom gland.

The protein localises to the secreted. Snake venom phospholipase A2 homolog that lacks catalytic activity. It shows myotoxic and weak anticoagulant activities and induces local edema a few hours after injection (5-10 ug) in the hind paw. A model of myotoxic mechanism has been proposed: an apo Lys49-PLA2 is activated by the entrance of a hydrophobic molecule (e.g. fatty acid) at the hydrophobic channel of the protein leading to a reorientation of a monomer. This reorientation causes a transition between 'inactive' to 'active' states, causing alignment of C-terminal and membrane-docking sites (MDoS) side-by-side and putting the membrane-disruption sites (MDiS) in the same plane, exposed to solvent and in a symmetric position for both monomers. The MDoS region stabilizes the toxin on membrane by the interaction of charged residues with phospholipid head groups. Subsequently, the MDiS region destabilizes the membrane with penetration of hydrophobic residues. This insertion causes a disorganization of the membrane, allowing an uncontrolled influx of ions (i.e. calcium and sodium), and eventually triggering irreversible intracellular alterations and cell death. The protein is Basic phospholipase A2 homolog Ts-K49a of Trimeresurus stejnegeri (Chinese green tree viper).